The primary structure comprises 448 residues: Probable D-serine dehydratase (448 aa).

Lysine 119 carries the post-translational modification N6-(pyridoxal phosphate)lysine.

Belongs to the serine/threonine dehydratase family. DsdA subfamily. The cofactor is pyridoxal 5'-phosphate.

The enzyme catalyses D-serine = pyruvate + NH4(+). This is Probable D-serine dehydratase from Chromobacterium violaceum (strain ATCC 12472 / DSM 30191 / JCM 1249 / CCUG 213 / NBRC 12614 / NCIMB 9131 / NCTC 9757 / MK).